The primary structure comprises 424 residues: Fasciclin-like arabinogalactan protein 1 (424 aa).

The N-terminal stretch at M1–A24 is a signal peptide. 2 consecutive FAS1 domains span residues H25–L170 and E184–L323. N-linked (GlcNAc...) asparagine glycosylation is found at N26, N128, N160, N186, and N240. The disordered stretch occupies residues A338–T393. Positions A355–A366 are enriched in basic residues. D396 carries the GPI-anchor amidated aspartate lipid modification. A propeptide spans A397 to L424 (removed in mature form).

The protein belongs to the fasciclin-like AGP family. Preferentially expressed in flowers.

The protein localises to the secreted. The protein resides in the extracellular space. It localises to the apoplast. Its subcellular location is the cell membrane. Its function is as follows. May be a cell surface adhesion protein. This is Fasciclin-like arabinogalactan protein 1 (FLA1) from Arabidopsis thaliana (Mouse-ear cress).